The primary structure comprises 510 residues: uncharacterized protein (510 aa).

The next 12 helical transmembrane spans lie at 17-37 (LKLGIISLGLGGLYSIILVVL), 56-76 (LIIHVNLSILIWLLSITASVW), 111-131 (VLYIYPKLAFFATLLIAISPL), 148-168 (IVFILGLSLFGVTLLLYAINI), 180-200 (LVNVTVFSTIIMFILSFVCFG), 223-243 (LLFWSGGHLLQFIYTQILIFI), 261-281 (FYLFILYLNFVFSILILFGHI), 300-320 (YLGGIAPILCLVGMVVELVLM), 355-375 (IIKTILLCSITLFLLGGLIAI), 382-402 (LVIPAHYHGSIVGISIACMGY), 434-454 (AIYLLTFGQILHILGLAFSGI), and 472-492 (LLMGMMGIGGLIAIVGGLMFV).

The protein to A.aeolicus AQ_155.

The protein localises to the cell membrane. This is an uncharacterized protein from Rickettsia prowazekii (strain Madrid E).